We begin with the raw amino-acid sequence, 791 residues long: 1-phosphatidylinositol 4,5-bisphosphate phosphodiesterase delta-4 (791 aa).

The region spanning 16–124 is the PH domain; it reads LLMQKGTMMR…WMQGLQLLVG (109 aa). The segment at 26–53 is substrate binding; sequence KVRSKSWKKLRFFRLQDDGMTVWHARQA. 3 consecutive EF-hand domains span residues 134-169, 170-205, and 207-237; these read RLDQ…MNVE, MDQE…LTQR, and EVQE…EQKE. The Ca(2+) site is built by D147, N149, D151, R153, E158, D183, S185, S187, T189, and E194. The GBA signature appears at 213 to 243; the sequence is EKFSSDGQKLTLLEFVDFLQEEQKEGERASD. The PI-PLC X-box domain occupies 290–435; sequence QDMTQPLNHY…LRGKILVKGK (146 aa). H305 is a catalytic residue. The Ca(2+) site is built by N306, E335, and D337. The active site involves H350. E384 contributes to the Ca(2+) binding site. Residues K433, K435, S551, and R578 each coordinate substrate. The PI-PLC Y-box domain maps to 522-638; the sequence is LSALVVYLKA…GYVLKPDFLR (117 aa). The 128-residue stretch at 638–765 folds into the C2 domain; it reads RDAQSSFHPE…QGYRHIHLLS (128 aa). Ca(2+)-binding residues include I679, D681, N705, D734, Y735, and D736. The PDZ-binding signature appears at 760-763; sequence HIHL.

In terms of assembly, interacts with GRIP1. Interacts (via GBA motif) with guanine nucleotide-binding protein G(i) alpha subunit GNAI3 (inactive GDP-bound form); low-affinity interaction. Ca(2+) is required as a cofactor.

It is found in the membrane. The protein resides in the nucleus. The protein localises to the cytoplasm. Its subcellular location is the endoplasmic reticulum. The enzyme catalyses a 1,2-diacyl-sn-glycero-3-phospho-(1D-myo-inositol-4,5-bisphosphate) + H2O = 1D-myo-inositol 1,4,5-trisphosphate + a 1,2-diacyl-sn-glycerol + H(+). It carries out the reaction a 1,2-diacyl-sn-glycero-3-phospho-(1D-myo-inositol) + H2O = 1D-myo-inositol 1-phosphate + a 1,2-diacyl-sn-glycerol + H(+). Hydrolyzes the phosphatidylinositol 4,5-bisphosphate (PIP2) to generate 2 second messenger molecules diacylglycerol (DAG) and inositol 1,4,5-trisphosphate (IP3). DAG mediates the activation of protein kinase C (PKC), while IP3 releases Ca(2+) from intracellular stores. Required for acrosome reaction in sperm during fertilization, probably by acting as an important enzyme for intracellular Ca(2+) mobilization in the zona pellucida-induced acrosome reaction. May play a role in cell growth. Modulates the liver regeneration in cooperation with nuclear PKC. Overexpression up-regulates the Erk signaling pathway and proliferation. The sequence is that of 1-phosphatidylinositol 4,5-bisphosphate phosphodiesterase delta-4 (PLCD4) from Bos taurus (Bovine).